Consider the following 129-residue polypeptide: Large ribosomal subunit protein uL22 (129 aa).

Belongs to the universal ribosomal protein uL22 family. Part of the 50S ribosomal subunit.

This protein binds specifically to 23S rRNA; its binding is stimulated by other ribosomal proteins, e.g. L4, L17, and L20. It is important during the early stages of 50S assembly. It makes multiple contacts with different domains of the 23S rRNA in the assembled 50S subunit and ribosome. Functionally, the globular domain of the protein is located near the polypeptide exit tunnel on the outside of the subunit, while an extended beta-hairpin is found that lines the wall of the exit tunnel in the center of the 70S ribosome. The chain is Large ribosomal subunit protein uL22 from Beijerinckia indica subsp. indica (strain ATCC 9039 / DSM 1715 / NCIMB 8712).